The following is a 792-amino-acid chain: Serine/threonine-protein kinase Nek4 (792 aa).

A Protein kinase domain is found at 6–261 (YCYMRVVGRG…VRSILRQPYI (256 aa)). ATP-binding positions include 12–20 (VGRGSYGEV) and Lys35. Asp131 serves as the catalytic Proton acceptor. Thr165 bears the Phosphothreonine; by autocatalysis mark. Disordered stretches follow at residues 329–358 (QEKPVDIGPLRSPASLEGHTGKQDMNNTGE), 379–515 (ANAG…LPSY), 527–611 (QQND…SITQ), and 628–657 (LSEDELSSSTSSTDKSDGDSREGKSHTNEM). Phosphoserine is present on residues Ser340 and Ser343. Composition is skewed to polar residues over residues 412–421 (QGNTKSSDQP), 456–467 (DQVTGIIENQDS), 473–484 (QPHSSMSEPSLS), 496–505 (AHSGTKSQFQ), and 541–551 (VNSSRTSSTAS). Lys566 carries the post-translational modification N6-methyllysine. The span at 602–611 (RFSSDCSITQ) shows a compositional bias: polar residues. Residues 641-657 (DKSDGDSREGKSHTNEM) are compositionally biased toward basic and acidic residues. A Phosphoserine modification is found at Ser675.

This sequence belongs to the protein kinase superfamily. NEK Ser/Thr protein kinase family. NIMA subfamily. Mn(2+) is required as a cofactor. Expressed ubiquitously among various organs and is up-regulated in the testis.

It localises to the cytoplasm. It is found in the cell projection. Its subcellular location is the cilium. It carries out the reaction L-seryl-[protein] + ATP = O-phospho-L-seryl-[protein] + ADP + H(+). The enzyme catalyses L-threonyl-[protein] + ATP = O-phospho-L-threonyl-[protein] + ADP + H(+). Functionally, required for normal entry into proliferative arrest after a limited number of cell divisions, also called replicative senescence. Required for normal cell cycle arrest in response to double-stranded DNA damage. Protein kinase that seems to act exclusively upon threonine residues. This chain is Serine/threonine-protein kinase Nek4 (Nek4), found in Mus musculus (Mouse).